The following is a 66-amino-acid chain: UPF0337 protein bsl1473 (66 aa).

The protein belongs to the UPF0337 (CsbD) family.

In Bradyrhizobium diazoefficiens (strain JCM 10833 / BCRC 13528 / IAM 13628 / NBRC 14792 / USDA 110), this protein is UPF0337 protein bsl1473.